The primary structure comprises 2025 residues: E3 ubiquitin-protein ligase TTC3 (2025 aa).

The segment at 1 to 230 is interaction with POLG; that stretch reads MDNFAEGDFT…TQSCMDCIEE (230 aa). TPR repeat units follow at residues 231–264 and 266–298; these read GELMKMKGNEEFSKERFDIAIIYYTRAIEYRPEN and LLYGNRALCFLRTGQFRNALGDGKRATILKNTW. Phosphoserine; by PKB/AKT2 is present on Ser-378. A disordered region spans residues 423–458; the sequence is DCHPEFSPPSSQPPKHKGKQKSRNNESEKFSSSSPL. TPR repeat units lie at residues 536-572 and 576-609; these read VLVVYGLAISLLGIGQPEELSEAENQFKRIIEHYPSE and CLAYCGIGKVYLKKNRFLEALNHFEKARTLIYRL. Residues 786–805 are disordered; that stretch reads ERMEEDLRESNPPKNEEQKE. A compositionally biased stretch (basic and acidic residues) spans 793-805; the sequence is RESNPPKNEEQKE. Residue Ser-1009 is modified to Phosphoserine. Disordered regions lie at residues 1012–1068, 1215–1295, 1773–1842, and 1894–1944; these read APFS…GPFA, KPDV…SCNS, DPSV…SPKK, and ILDE…QKAE. Residues 1019–1029 show a composition bias toward basic residues; that stretch reads VKNKSKKKKPK. Polar residues predominate over residues 1038-1052; the sequence is SGTTSVTSNNEIITS. The residue at position 1061 (Ser-1061) is a Phosphoserine. Basic and acidic residues predominate over residues 1894–1912; sequence ILDEQKKKKPNPGKDKRTY. Over residues 1913-1928 the composition is skewed to polar residues; that stretch reads EPSSATPVTRSSQGSP. The RING-type zinc finger occupies 1957-1997; the sequence is CEICHEVFKSKNVRVLKCGHKYHKGCFKQWLKGQSACPACQ. The disordered stretch occupies residues 2004 to 2025; that stretch reads EESPSGRGWPSQNQELPSCSSR. Over residues 2013-2025 the composition is skewed to polar residues; sequence PSQNQELPSCSSR.

In terms of assembly, interacts (when phosphorylated on Ser-378) with AKT1, AKT2 and AKT3 (when phosphorylated). Interacts with CIT. Interacts with POLG. Interacts with HSP70. Interacts with SMURF2. Post-translationally, phosphorylation on Ser-378 by Akt is required for ubiquitin ligase activity. Proteolytically cleaved into differently sized N- and C-terminal fragments. As to expression, found in all tissues examined.

The protein resides in the nucleus. It localises to the cytoplasm. Its subcellular location is the golgi apparatus. It carries out the reaction S-ubiquitinyl-[E2 ubiquitin-conjugating enzyme]-L-cysteine + [acceptor protein]-L-lysine = [E2 ubiquitin-conjugating enzyme]-L-cysteine + N(6)-ubiquitinyl-[acceptor protein]-L-lysine.. The protein operates within protein modification; protein ubiquitination. Functionally, E3 ubiquitin-protein ligase which catalyzes the formation of 'Lys-48'-polyubiquitin chains. Mediates the ubiquitination and subsequent degradation of phosphorylated Akt (AKT1, AKT2 and AKT3) in the nucleus. Acts as a terminal regulator of Akt signaling after activation; its phosphorylation by Akt, which is a prerequisite for ubiquitin ligase activity, suggests the existence of a regulation mechanism required to control Akt levels after activation. Positively regulates TGFB1-induced epithelial-mesenchymal transition and myofibroblast differentiation by mediating the ubiquitination and subsequent degradation of SMURF2. Regulates neuronal differentiation by regulating actin remodeling and Golgi organization via a signaling cascade involving RHOA, CIT and ROCK. Inhibits cell proliferation. The sequence is that of E3 ubiquitin-protein ligase TTC3 (TTC3) from Homo sapiens (Human).